The chain runs to 199 residues: ATP-dependent Clp protease proteolytic subunit (199 aa).

Residue serine 99 is the Nucleophile of the active site. The active site involves histidine 124.

The protein belongs to the peptidase S14 family. In terms of assembly, fourteen ClpP subunits assemble into 2 heptameric rings which stack back to back to give a disk-like structure with a central cavity, resembling the structure of eukaryotic proteasomes.

The protein resides in the cytoplasm. The enzyme catalyses Hydrolysis of proteins to small peptides in the presence of ATP and magnesium. alpha-casein is the usual test substrate. In the absence of ATP, only oligopeptides shorter than five residues are hydrolyzed (such as succinyl-Leu-Tyr-|-NHMec, and Leu-Tyr-Leu-|-Tyr-Trp, in which cleavage of the -Tyr-|-Leu- and -Tyr-|-Trp bonds also occurs).. Its function is as follows. Cleaves peptides in various proteins in a process that requires ATP hydrolysis. Has a chymotrypsin-like activity. Plays a major role in the degradation of misfolded proteins. The polypeptide is ATP-dependent Clp protease proteolytic subunit (Lactococcus lactis subsp. lactis (strain IL1403) (Streptococcus lactis)).